Here is a 240-residue protein sequence, read N- to C-terminus: MQAKIKNKRVLVKFSGEALAGDNQFGIDIHVLDHIAKEIKSLVENDIEVGIVIGGGNIIRGVSAAQGGIIRRTSGDYMGMLATVINAVAMQEALEHIGLDTRVQSAIEIKEICESYIYRKAIRHLEKGRVVIFGAGTGNPFFTTDTAATLRAIEIGSDLIIKATKVDGIYDKDPNKFKDAKKLDTLSYNDALIGDIEVMDDTAISLAKDNKLPIVVCNMFKKGNLLQVIKHQQGVFSMVK.

13–16 contributes to the ATP binding site; that stretch reads KFSG. Residue G55 participates in UMP binding. The ATP site is built by G56 and R60. Residues D76 and 137 to 144 contribute to the UMP site; that span reads TGNPFFTT. Residues T164, Y170, and D173 each coordinate ATP.

The protein belongs to the UMP kinase family. As to quaternary structure, homohexamer.

The protein resides in the cytoplasm. It carries out the reaction UMP + ATP = UDP + ADP. The protein operates within pyrimidine metabolism; CTP biosynthesis via de novo pathway; UDP from UMP (UMPK route): step 1/1. Its activity is regulated as follows. Inhibited by UTP. Its function is as follows. Catalyzes the reversible phosphorylation of UMP to UDP. The chain is Uridylate kinase from Helicobacter pylori (strain ATCC 700392 / 26695) (Campylobacter pylori).